The sequence spans 130 residues: Glycine cleavage system H protein (130 aa).

Positions 24 to 106 (TATVGITDFA…YGDGWMFKVK (83 aa)) constitute a Lipoyl-binding domain. Lys-65 carries the N6-lipoyllysine modification.

This sequence belongs to the GcvH family. The glycine cleavage system is composed of four proteins: P, T, L and H. It depends on (R)-lipoate as a cofactor.

In terms of biological role, the glycine cleavage system catalyzes the degradation of glycine. The H protein shuttles the methylamine group of glycine from the P protein to the T protein. This chain is Glycine cleavage system H protein, found in Marinobacter nauticus (strain ATCC 700491 / DSM 11845 / VT8) (Marinobacter aquaeolei).